The chain runs to 341 residues: MDTVRIAVVGAGVMGLSTAVCISKMVPGCSITVISDKFTPETTSDVAAGMLIPPTYPDTPIQKQKQWFKETFDHLFAIVNSAEAEDAGVILVSGWQIFQSIPTEEVPYWADVVLGFRKMTKDELKKFPQHVFGHAFTTLKCEGPAYLPWLQKRVKGNGGLILTRRIEDLWELHPSFDIVVNCSGLGSRQLAGDSKIFPVRGQVLKVQAPWVKHFIRDSSGLTYIYPGISNVTLGGTRQKGDWNLSPDAEISKEILSRCCALEPSLRGAYDLREKVGLRPTRPGVRLEKELLAQDSRRLPVVHHYGHGSGGIAMHWGTALEATRLVNECVQVLRTPAPKSKL.

M1 bears the Blocked amino end (Met) mark. Residues D36, K37, T43, S44, M50, G307, and I311 each coordinate FAD. Positions 339-341 match the Microbody targeting signal motif; sequence SKL.

It belongs to the DAMOX/DASOX family. In terms of assembly, monomer. Interacts with PEX5; the interaction is direct and required for localization of DDO to the peroxisome. FAD serves as cofactor. In terms of tissue distribution, in the kidney, expressed in epithelial cells of the proximal tubules and in the liver (at protein level).

The protein localises to the peroxisome matrix. It localises to the cytoplasm. Its subcellular location is the cytosol. It carries out the reaction D-aspartate + O2 + H2O = oxaloacetate + H2O2 + NH4(+). The catalysed reaction is D-glutamate + O2 + H2O = H2O2 + 2-oxoglutarate + NH4(+). Inhibited by phenylglyoxal; chemical modification of arginine residues in the enzyme with phenylglyoxal leads to the irreversible loss of activity towards dicarboxylic D-amino acids, paralleled by a transient appearance of activity versus monocarboxylic ones. Its function is as follows. Selectively catalyzes the oxidative deamination of acidic amino acids. Suppresses the level of D-aspartate in the brain, an amino acid that can act as an agonist for glutamate receptors. Protects the organism from the toxicity of D-amino acids. May also function in the intestine. The chain is D-aspartate oxidase (DDO) from Bos taurus (Bovine).